The following is a 487-amino-acid chain: Glutamyl-tRNA(Gln) amidotransferase subunit A (487 aa).

Residues Lys-80 and Ser-155 each act as charge relay system in the active site. Residue Ser-179 is the Acyl-ester intermediate of the active site.

This sequence belongs to the amidase family. GatA subfamily. Heterotrimer of A, B and C subunits.

The enzyme catalyses L-glutamyl-tRNA(Gln) + L-glutamine + ATP + H2O = L-glutaminyl-tRNA(Gln) + L-glutamate + ADP + phosphate + H(+). In terms of biological role, allows the formation of correctly charged Gln-tRNA(Gln) through the transamidation of misacylated Glu-tRNA(Gln) in organisms which lack glutaminyl-tRNA synthetase. The reaction takes place in the presence of glutamine and ATP through an activated gamma-phospho-Glu-tRNA(Gln). This chain is Glutamyl-tRNA(Gln) amidotransferase subunit A, found in Leptospira interrogans serogroup Icterohaemorrhagiae serovar copenhageni (strain Fiocruz L1-130).